The chain runs to 700 residues: AP-2 complex subunit beta (700 aa).

Residues Val-625–Ser-700 are disordered. Ser-649 carries the phosphoserine modification. Residue Thr-652 is modified to Phosphothreonine. Basic and acidic residues predominate over residues Ala-653–Glu-663. Ser-683 carries the post-translational modification Phosphoserine.

It belongs to the adaptor complexes large subunit family. In terms of assembly, adaptor protein complex 2 (AP-2) is a heterotetramer composed of two large adaptins (alpha-type subunit APL3 and beta-type subunit APL1), a medium chain (mu-type subunit APM4) and a small adaptin (sigma-type subunit APS2). Interacts with APS2.

The protein resides in the cell membrane. Its subcellular location is the membrane. The protein localises to the coated pit. Adaptins are components of the adaptor complexes which link clathrin to receptors in coated vesicles. Clathrin-associated protein complexes are believed to interact with the cytoplasmic tails of membrane proteins, leading to their selection and concentration. Beta adaptin is a subunit of the plasma membrane adaptor. The chain is AP-2 complex subunit beta (APL1) from Saccharomyces cerevisiae (strain ATCC 204508 / S288c) (Baker's yeast).